The chain runs to 115 residues: Tyrosine-protein phosphatase 22 (115 aa).

One can recognise a Tyrosine-protein phosphatase domain in the interval 1–115 (WLMIVEQKCR…ETGGDAPMVV (115 aa)). Asp83 is a binding site for substrate.

Belongs to the protein-tyrosine phosphatase family.

The catalysed reaction is O-phospho-L-tyrosyl-[protein] + H2O = L-tyrosyl-[protein] + phosphate. In Styela plicata (Wrinkled sea squirt), this protein is Tyrosine-protein phosphatase 22 (STY-22).